Here is a 1085-residue protein sequence, read N- to C-terminus: MNYTSVNKIRLWVLIVFLILYNIKCICENISDLKKRLCFNNFSNSKKKIKKKWLAKKKKNYLTIWKNKTYTTKRRNGYGKIEYKREENKKDDYNFMNTSLYLNYISNVKNFLFNKNNNKKNKIYYHKCKKSNIIEAKINDNDTLLSDEEFRNDVDRNDKEYYNIKKEYSENVCNQNRINDLSNCSVSSNNNILNECSSEVKKEMNYPLHNELYDNLNDNTIGHLKSEKCKEKYIRNFCILAHIDSGKSTLADRFLELTNTIKKKRMQEQFLDMMCLEREKGITIKLKAVRMHYNNYVFNLIDTPGHFDFYHEVKRSLNVCEGAILLIDGGKGIQSQTLNIFFELKKHDIKIIPVINKIDLSTCLYDKIKDDLINKFNFKENEILKISAKYGKNVKMLFQRIISDIPPPINTINSFFRGVVFDSFFDQYKGVVLIIKVLNGELRKKTEIFFINSAKSYIIQEVGYLVPEMKPTDVISQGDIAYVCSNIRNCDDIQISETIVNKDIIKKNNHNEFVINFKKINLGRDKNIMQRLSDEGKQYLTHHNKGEIKGDENGQVKCDENGQVKCDENGQVKCDENGQVKCDENGQVKCDENGQVKCDENGQVKCDENGQVKCDENGQVKCDENGQVKCDENGQVKCDENGQVKCDENGQVKCDKNKGEIKSFQYNEVKVDERYERNKEEIIYDHEHKKEGIFNIHKNDDLIKENIKEKENFSCSIQGNDNAIPILKKTDINIKSIAANKIEASYPSVYCNIYCVNDKKSNELEMSLNKLKLNDSSFSFKKYICETLGKGFKCGFNGLLHLNIIQERIKREYNIDTIVTAPSVNYLIRVKEKYMDKRLKEKLLEKNFDIQNMHIEQMDKTSSDDCFFFMTSNVNDIPTKNVVHSIYEPYVKTNIITPEIYQKYIMNECFKRRGIFIKKEIMNDQIIFLFEMPLSEILINFLDQIKSSTKGYGSMSYENIIIYKPSELYKIHIYINKKKIDSLSFLAHKRNYEDKSRKLVSKLKTLINPHQFLIIIQAALESKIFVSEKIKPLKKNVTAKCYGGDITRRRKLIEKQNEGKKKMFEIGKVKLPPNIFTKLFDIKSE.

The region spanning 232–409 is the tr-type G domain; the sequence is KYIRNFCILA…RIISDIPPPI (178 aa). Residues 241-248, 302-306, and 356-359 each bind GTP; these read AHIDSGKS, DTPGH, and NKID.

This sequence belongs to the TRAFAC class translation factor GTPase superfamily. Classic translation factor GTPase family. LepA subfamily.

The protein resides in the mitochondrion inner membrane. It carries out the reaction GTP + H2O = GDP + phosphate + H(+). In terms of biological role, promotes mitochondrial protein synthesis. May act as a fidelity factor of the translation reaction, by catalyzing a one-codon backward translocation of tRNAs on improperly translocated ribosomes. Binds to mitochondrial ribosomes in a GTP-dependent manner. The polypeptide is Translation factor GUF1 homolog, mitochondrial (Plasmodium falciparum (isolate 3D7)).